Here is an 85-residue protein sequence, read N- to C-terminus: Makatoxin-3 (85 aa).

Residues 1 to 19 (MNYLIVISFALLLMTGVES) form the signal peptide. The LCN-type CS-alpha/beta domain occupies 21–83 (RDAYIAKKEN…VPIRIPGPCI (63 aa)). 4 disulfides stabilise this stretch: Cys-31-Cys-82, Cys-35-Cys-55, Cys-41-Cys-65, and Cys-45-Cys-67.

It belongs to the long (4 C-C) scorpion toxin superfamily. Sodium channel inhibitor family. Alpha subfamily. In terms of tissue distribution, expressed by the venom gland.

The protein resides in the secreted. Its function is as follows. This protein markedly relaxes the rat carbachol-precontracted anococcygeus muscle. This relaxation is inhibited by the inhibitor of nitric oxide (NO) synthase, N-nitro-L-arginine methyl ester (L-NAME), suggesting that the response induced by this protein is NO-mediated. This chain is Makatoxin-3, found in Olivierus martensii (Manchurian scorpion).